The sequence spans 199 residues: Large ribosomal subunit protein eL13B (199 aa).

Phosphothreonine is present on residues threonine 144 and threonine 152.

Belongs to the eukaryotic ribosomal protein eL13 family. Component of the large ribosomal subunit (LSU). Mature yeast ribosomes consist of a small (40S) and a large (60S) subunit. The 40S small subunit contains 1 molecule of ribosomal RNA (18S rRNA) and 33 different proteins (encoded by 57 genes). The large 60S subunit contains 3 rRNA molecules (25S, 5.8S and 5S rRNA) and 46 different proteins (encoded by 81 genes).

Its subcellular location is the cytoplasm. Functionally, component of the ribosome, a large ribonucleoprotein complex responsible for the synthesis of proteins in the cell. The small ribosomal subunit (SSU) binds messenger RNAs (mRNAs) and translates the encoded message by selecting cognate aminoacyl-transfer RNA (tRNA) molecules. The large subunit (LSU) contains the ribosomal catalytic site termed the peptidyl transferase center (PTC), which catalyzes the formation of peptide bonds, thereby polymerizing the amino acids delivered by tRNAs into a polypeptide chain. The nascent polypeptides leave the ribosome through a tunnel in the LSU and interact with protein factors that function in enzymatic processing, targeting, and the membrane insertion of nascent chains at the exit of the ribosomal tunnel. The sequence is that of Large ribosomal subunit protein eL13B from Saccharomyces cerevisiae (strain ATCC 204508 / S288c) (Baker's yeast).